A 217-amino-acid chain; its full sequence is Probable transaldolase (217 aa).

K83 functions as the Schiff-base intermediate with substrate in the catalytic mechanism.

This sequence belongs to the transaldolase family. Type 3B subfamily.

It is found in the cytoplasm. It catalyses the reaction D-sedoheptulose 7-phosphate + D-glyceraldehyde 3-phosphate = D-erythrose 4-phosphate + beta-D-fructose 6-phosphate. It participates in carbohydrate degradation; pentose phosphate pathway; D-glyceraldehyde 3-phosphate and beta-D-fructose 6-phosphate from D-ribose 5-phosphate and D-xylulose 5-phosphate (non-oxidative stage): step 2/3. Its function is as follows. Transaldolase is important for the balance of metabolites in the pentose-phosphate pathway. The polypeptide is Probable transaldolase (Brucella abortus (strain S19)).